We begin with the raw amino-acid sequence, 180 residues long: Flavodoxin B (180 aa).

Residues 4–173 (IGLFFGSNTG…RVAAWLAQIA (170 aa)) form the Flavodoxin-like domain.

It belongs to the flavodoxin family. It depends on FMN as a cofactor.

In terms of biological role, low-potential electron donor to a number of redox enzymes. NifF is the electron donor to nitrogenase. The polypeptide is Flavodoxin B (nifF) (Azotobacter chroococcum mcd 1).